Consider the following 307-residue polypeptide: tRNA dimethylallyltransferase (307 aa).

An ATP-binding site is contributed by 9 to 16 (GATGTGKS). 11–16 (TGTGKS) contacts substrate.

The protein belongs to the IPP transferase family. Monomer. Mg(2+) is required as a cofactor.

It catalyses the reaction adenosine(37) in tRNA + dimethylallyl diphosphate = N(6)-dimethylallyladenosine(37) in tRNA + diphosphate. Functionally, catalyzes the transfer of a dimethylallyl group onto the adenine at position 37 in tRNAs that read codons beginning with uridine, leading to the formation of N6-(dimethylallyl)adenosine (i(6)A). The chain is tRNA dimethylallyltransferase from Clavibacter sepedonicus (Clavibacter michiganensis subsp. sepedonicus).